We begin with the raw amino-acid sequence, 144 residues long: Large ribosomal subunit protein uL14 (144 aa).

This sequence belongs to the universal ribosomal protein uL14 family. As to quaternary structure, part of the 50S ribosomal subunit. Forms a cluster with proteins L3 and L24e, part of which may contact the 16S rRNA in 2 intersubunit bridges.

In terms of biological role, binds to 23S rRNA. Forms part of two intersubunit bridges in the 70S ribosome. This is Large ribosomal subunit protein uL14 from Pyrobaculum islandicum (strain DSM 4184 / JCM 9189 / GEO3).